A 932-amino-acid polypeptide reads, in one-letter code: Isoleucine--tRNA ligase (932 aa).

Residues 57-67 (PYANGDIHIGT) carry the 'HIGH' region motif. Glutamate 559 serves as a coordination point for L-isoleucyl-5'-AMP. The 'KMSKS' region signature appears at 600 to 604 (KMSKS). Lysine 603 contacts ATP. Cysteine 899, cysteine 902, cysteine 919, and cysteine 922 together coordinate Zn(2+).

Belongs to the class-I aminoacyl-tRNA synthetase family. IleS type 1 subfamily. In terms of assembly, monomer. The cofactor is Zn(2+).

The protein resides in the cytoplasm. The enzyme catalyses tRNA(Ile) + L-isoleucine + ATP = L-isoleucyl-tRNA(Ile) + AMP + diphosphate. Its function is as follows. Catalyzes the attachment of isoleucine to tRNA(Ile). As IleRS can inadvertently accommodate and process structurally similar amino acids such as valine, to avoid such errors it has two additional distinct tRNA(Ile)-dependent editing activities. One activity is designated as 'pretransfer' editing and involves the hydrolysis of activated Val-AMP. The other activity is designated 'posttransfer' editing and involves deacylation of mischarged Val-tRNA(Ile). The sequence is that of Isoleucine--tRNA ligase from Caldanaerobacter subterraneus subsp. tengcongensis (strain DSM 15242 / JCM 11007 / NBRC 100824 / MB4) (Thermoanaerobacter tengcongensis).